The chain runs to 103 residues: Small ribosomal subunit protein uS10 (103 aa).

Belongs to the universal ribosomal protein uS10 family. Part of the 30S ribosomal subunit.

In terms of biological role, involved in the binding of tRNA to the ribosomes. This is Small ribosomal subunit protein uS10 from Polynucleobacter necessarius subsp. necessarius (strain STIR1).